The primary structure comprises 563 residues: MGFTTKIIFLYNLVLVYAGFDDPRKAIELVQKRYGRPCDCSGGQVSEPPSDRVSQVTCSGKTAYLMPDQRWKCKSIPKDTSPSGPLQECPCNSYQSSVHSSCYTSYQQCRSGNKTYYTATLLKTQTGGTSDVQVLGSTNKLIQSPCNGIKGQSICWSTTAPIHVSDGGGPLDTTRIKSVQRKLEEIHKALYPELQYHPLAIPKVRDNLMVDAQTLNILNATYNLLLMSNTSLVDDCWLCLKLGPPTPLAIPNFLLSYVTRSSDNISCLIIPPLLVQPMQFSNSSCLFSPSYNSTEEIDLGHVAFSNCTSITNVTGPICAVNGSVFLCGNNMAYTYLPTNWTGLCVLATLLPDIDIIPGDEPVPIPAIDHFIYRPKRAIQFIPLLAGLGITAAFTTGATGLGVSVTQYTKLSNQLISDVQILSSTIQDLQDQVDSLAEVVLQNRRGLDLLTAEQGGICLALQEKCCFYVNKSGIVRDKIKTLQEELERRRKDLASNPLWTGLQGLLPYLLPFLGPLLTLLLLLTIGPCIFNRLTAFINDKLNIIHAMVLTQQYQVLRTDEEAQD.

The signal sequence occupies residues Met-1–Ala-18. Residues Gly-19 to Gly-503 lie on the Extracellular side of the membrane. N-linked (GlcNAc...) asparagine; by host glycans are attached at residues Asn-113, Asn-219, and Asn-229. The short motif at Cys-236 to Cys-239 is the CXXC element. 3 cysteine pairs are disulfide-bonded: Cys-236–Cys-239, Cys-236–Cys-465, and Cys-457–Cys-464. N-linked (GlcNAc...) asparagine; by host glycosylation is found at Asn-264, Asn-282, Asn-292, Asn-306, Asn-312, Asn-321, and Asn-339. The tract at residues Phe-380–Leu-400 is fusion peptide. Coiled coils occupy residues Gly-401–Ala-451 and Gln-461–Leu-497. An immunosuppression region spans residues Leu-440–Ile-456. Residues Cys-457–Cys-465 carry the CX6CC motif. The N-linked (GlcNAc...) asparagine; by host glycan is linked to Asn-469. A helical membrane pass occupies residues Leu-504–Ile-524. Residues Gly-525 to Asp-563 lie on the Cytoplasmic side of the membrane. Cys-527 is lipidated: S-palmitoyl cysteine; by host. Positions Tyr-552–Leu-555 match the YXXL motif; contains endocytosis signal motif.

As to quaternary structure, the mature envelope protein (Env) consists of a trimer of SU-TM heterodimers attached by a labile interchain disulfide bond. Post-translationally, specific enzymatic cleavages in vivo yield mature proteins. Envelope glycoproteins are synthesized as an inactive precursor that is N-glycosylated and processed likely by host cell furin or by a furin-like protease in the Golgi to yield the mature SU and TM proteins. The cleavage site between SU and TM requires the minimal sequence [KR]-X-[KR]-R. The R-peptide is released from the C-terminus of the cytoplasmic tail of the TM protein upon particle formation as a result of proteolytic cleavage by the viral protease. Cleavage of this peptide is required for TM to become fusogenic. The CXXC motif is highly conserved across a broad range of retroviral envelope proteins. It is thought to participate in the formation of a labile disulfide bond possibly with the CX6CC motif present in the transmembrane protein. Isomerization of the intersubunit disulfide bond to an SU intrachain disulfide bond is thought to occur upon receptor recognition in order to allow membrane fusion. In terms of processing, the transmembrane protein is palmitoylated.

Its subcellular location is the virion membrane. The protein resides in the host cell membrane. Its function is as follows. The surface protein (SU) attaches the virus to the host cell by binding to its receptor. This interaction triggers the refolding of the transmembrane protein (TM) and is thought to activate its fusogenic potential by unmasking its fusion peptide. Fusion occurs at the host cell plasma membrane. Functionally, the transmembrane protein (TM) acts as a class I viral fusion protein. Under the current model, the protein has at least 3 conformational states: pre-fusion native state, pre-hairpin intermediate state, and post-fusion hairpin state. During viral and target cell membrane fusion, the coiled coil regions (heptad repeats) assume a trimer-of-hairpins structure, positioning the fusion peptide in close proximity to the C-terminal region of the ectodomain. The formation of this structure appears to drive apposition and subsequent fusion of viral and target cell membranes. Membranes fusion leads to delivery of the nucleocapsid into the cytoplasm. The sequence is that of Envelope glycoprotein (env) from Baboon endogenous virus (strain M7).